A 409-amino-acid polypeptide reads, in one-letter code: O-glucosyltransferase rumi (409 aa).

Positions 1–20 (MLINVVLIILLVGLNGKASG) are cleaved as a signal peptide. Cystine bridges form between C62-C73, C71-C376, C118-C124, and C280-C303. D149 functions as the Proton donor/acceptor in the catalytic mechanism. Positions 190–195 (ATKLHP) are interaction with the consensus sequence C-X-S-X-[PA]-C in peptide substrates. UDP-alpha-D-glucose contacts are provided by residues 227–231 (RGSRT), R235, 274–276 (VSF), and 292–296 (AASFR). Positions 406–409 (KDEL) match the Prevents secretion from ER motif.

Belongs to the glycosyltransferase 90 family.

The protein localises to the endoplasmic reticulum lumen. The protein operates within protein modification; protein glycosylation. Its function is as follows. Protein O-glucosyltransferase. Catalyzes the reaction that attaches glucose through an O-glycosidic linkage to a conserved serine residue found in the consensus sequence C-X-S-X-[PA]-C in epidermal growth factor-like repeats. Regulates Notch signaling by glucosylating Notch in the ER, glucosylation is required for the correct folding and cleavage of Notch. This chain is O-glucosyltransferase rumi, found in Drosophila pseudoobscura pseudoobscura (Fruit fly).